The primary structure comprises 479 residues: Ribulose bisphosphate carboxylase large chain (479 aa).

A propeptide spanning residues 1 to 2 (MS) is cleaved from the precursor. N123 and T173 together coordinate substrate. Catalysis depends on K175, which acts as the Proton acceptor. K177 is a binding site for substrate. Positions 201, 203, and 204 each coordinate Mg(2+). K201 carries the post-translational modification N6-carboxylysine. S208 carries the phosphoserine modification. The Proton acceptor role is filled by H294. Positions 295 and 327 each coordinate substrate. T330 carries the phosphothreonine modification. Substrate is bound at residue S379.

It belongs to the RuBisCO large chain family. Type I subfamily. Heterohexadecamer of 8 large chains and 8 small chains; disulfide-linked. The disulfide link is formed within the large subunit homodimers. Mg(2+) is required as a cofactor. Post-translationally, the disulfide bond which can form in the large chain dimeric partners within the hexadecamer appears to be associated with oxidative stress and protein turnover.

Its subcellular location is the plastid. It localises to the chloroplast. It catalyses the reaction 2 (2R)-3-phosphoglycerate + 2 H(+) = D-ribulose 1,5-bisphosphate + CO2 + H2O. The enzyme catalyses D-ribulose 1,5-bisphosphate + O2 = 2-phosphoglycolate + (2R)-3-phosphoglycerate + 2 H(+). RuBisCO catalyzes two reactions: the carboxylation of D-ribulose 1,5-bisphosphate, the primary event in carbon dioxide fixation, as well as the oxidative fragmentation of the pentose substrate in the photorespiration process. Both reactions occur simultaneously and in competition at the same active site. This chain is Ribulose bisphosphate carboxylase large chain, found in Capsella bursa-pastoris (Shepherd's purse).